Reading from the N-terminus, the 326-residue chain is Malate dehydrogenase (326 aa).

12–18 (GAAGQIA) serves as a coordination point for NAD(+). Positions 93 and 99 each coordinate substrate. Residues asparagine 106, glutamine 113, and 130 to 132 (VGN) contribute to the NAD(+) site. Residues asparagine 132 and arginine 163 each coordinate substrate. The Proton acceptor role is filled by histidine 188.

This sequence belongs to the LDH/MDH superfamily. MDH type 2 family.

The enzyme catalyses (S)-malate + NAD(+) = oxaloacetate + NADH + H(+). Its function is as follows. Catalyzes the reversible oxidation of malate to oxaloacetate. The polypeptide is Malate dehydrogenase (Corynebacterium diphtheriae (strain ATCC 700971 / NCTC 13129 / Biotype gravis)).